A 188-amino-acid polypeptide reads, in one-letter code: Ribosome-recycling factor (188 aa).

Belongs to the RRF family.

Its subcellular location is the cytoplasm. Functionally, responsible for the release of ribosomes from messenger RNA at the termination of protein biosynthesis. May increase the efficiency of translation by recycling ribosomes from one round of translation to another. This Lawsonia intracellularis (strain PHE/MN1-00) protein is Ribosome-recycling factor.